The following is a 455-amino-acid chain: Phosphoglucosamine mutase (455 aa).

The Phosphoserine intermediate role is filled by serine 103. The Mg(2+) site is built by serine 103, aspartate 243, aspartate 245, and aspartate 247. Position 103 is a phosphoserine (serine 103).

It belongs to the phosphohexose mutase family. Mg(2+) is required as a cofactor. In terms of processing, activated by phosphorylation.

It catalyses the reaction alpha-D-glucosamine 1-phosphate = D-glucosamine 6-phosphate. Its function is as follows. Catalyzes the conversion of glucosamine-6-phosphate to glucosamine-1-phosphate. In Halorhodospira halophila (strain DSM 244 / SL1) (Ectothiorhodospira halophila (strain DSM 244 / SL1)), this protein is Phosphoglucosamine mutase.